Reading from the N-terminus, the 363-residue chain is tRNA/tmRNA (uracil-C(5))-methyltransferase (363 aa).

Residues Q187, Y215, N220, E236, and D296 each contribute to the S-adenosyl-L-methionine site. C321 (nucleophile) is an active-site residue. The active-site Proton acceptor is E355.

The protein belongs to the class I-like SAM-binding methyltransferase superfamily. RNA M5U methyltransferase family. TrmA subfamily.

It catalyses the reaction uridine(54) in tRNA + S-adenosyl-L-methionine = 5-methyluridine(54) in tRNA + S-adenosyl-L-homocysteine + H(+). The enzyme catalyses uridine(341) in tmRNA + S-adenosyl-L-methionine = 5-methyluridine(341) in tmRNA + S-adenosyl-L-homocysteine + H(+). In terms of biological role, dual-specificity methyltransferase that catalyzes the formation of 5-methyluridine at position 54 (m5U54) in all tRNAs, and that of position 341 (m5U341) in tmRNA (transfer-mRNA). The sequence is that of tRNA/tmRNA (uracil-C(5))-methyltransferase from Pseudomonas fluorescens.